The following is a 386-amino-acid chain: Queuine tRNA-ribosyltransferase (386 aa).

Asp-102 functions as the Proton acceptor in the catalytic mechanism. Residues 102-106, Asp-156, Gln-203, and Gly-230 each bind substrate; that span reads DSGGY. The segment at 261 to 267 is RNA binding; it reads GVGKPDD. The active-site Nucleophile is Asp-280. Positions 285 to 289 are RNA binding; important for wobble base 34 recognition; the sequence is TRSGR. Zn(2+) is bound by residues Cys-318, Cys-320, Cys-323, and His-349.

The protein belongs to the queuine tRNA-ribosyltransferase family. In terms of assembly, homodimer. Within each dimer, one monomer is responsible for RNA recognition and catalysis, while the other monomer binds to the replacement base PreQ1. Zn(2+) is required as a cofactor.

The catalysed reaction is 7-aminomethyl-7-carbaguanine + guanosine(34) in tRNA = 7-aminomethyl-7-carbaguanosine(34) in tRNA + guanine. It participates in tRNA modification; tRNA-queuosine biosynthesis. Catalyzes the base-exchange of a guanine (G) residue with the queuine precursor 7-aminomethyl-7-deazaguanine (PreQ1) at position 34 (anticodon wobble position) in tRNAs with GU(N) anticodons (tRNA-Asp, -Asn, -His and -Tyr). Catalysis occurs through a double-displacement mechanism. The nucleophile active site attacks the C1' of nucleotide 34 to detach the guanine base from the RNA, forming a covalent enzyme-RNA intermediate. The proton acceptor active site deprotonates the incoming PreQ1, allowing a nucleophilic attack on the C1' of the ribose to form the product. After dissociation, two additional enzymatic reactions on the tRNA convert PreQ1 to queuine (Q), resulting in the hypermodified nucleoside queuosine (7-(((4,5-cis-dihydroxy-2-cyclopenten-1-yl)amino)methyl)-7-deazaguanosine). This chain is Queuine tRNA-ribosyltransferase, found in Zymomonas mobilis subsp. mobilis (strain ATCC 31821 / ZM4 / CP4).